Consider the following 157-residue polypeptide: Ribosome maturation factor RimP (157 aa).

It belongs to the RimP family.

It is found in the cytoplasm. Required for maturation of 30S ribosomal subunits. The polypeptide is Ribosome maturation factor RimP (Lactococcus lactis subsp. lactis (strain IL1403) (Streptococcus lactis)).